Here is a 480-residue protein sequence, read N- to C-terminus: MNKKISFIINGRVEIFPESDDLVQSINFGDNSVHLPVLNDSQVKNIIDYNENNELQLHNIINFLYTVGQRWKNEEYSRRRTYIRDLKRYMGYSEEMAKLEANWISMILCSKGGLYDLVKNELGSRHIMDEWLPQDESYIRAFPKGKSVHLLTGNVPLSGVLSILRAILTKNQCIIKTSSTDPFTANALALSFIDVDPHHPVTRSLSVVYWQHQGDISLAKEIMQHADVVVAWGGEDAINWAVKHAPPDIDVMKFGPKKSFCIIDNPVDLVSAATGAAHDVCFYDQQACFSTQNIYYMGSHYEEFKLALIEKLNLYAHILPNTKKDFDEKAAYSLVQKECLFAGLKVEVDVHQRWMVIESNAGVELNQPLGRCVYLHHVDNIEQILPYVRKNKTQTISVFPWEAALKYRDLLALKGAERIVEAGMNNIFRVGGAHDGMRPLQRLVTYISHERPSHYTAKDVAVEIEQTRFLEEDKFLVFVP.

The protein belongs to the LuxC family.

It catalyses the reaction a long-chain fatty aldehyde + NADP(+) + CoA = a long-chain fatty acyl-CoA + NADPH + H(+). It participates in lipid metabolism; fatty acid reduction for biolumincescence. Functionally, luxC is the fatty acid reductase enzyme responsible for synthesis of the aldehyde substrate for the luminescent reaction catalyzed by luciferase. The protein is Long-chain acyl-protein thioester reductase (luxC) of Photorhabdus luminescens (Xenorhabdus luminescens).